Here is a 505-residue protein sequence, read N- to C-terminus: T-cell activation GTPase-activating protein 1 (505 aa).

Disordered regions lie at residues 81 to 147, 160 to 212, 242 to 293, 311 to 339, and 414 to 441; these read DDSL…SESS, QQDR…DPFT, QGHI…QREI, RTSS…SQLS, and KPST…HRLS. Residues 90–102 are compositionally biased toward polar residues; sequence SDVSTLQNDSAYD. Residues 203–212 are compositionally biased toward acidic residues; that stretch reads EGDEAEDPFT. Over residues 250-262 the composition is skewed to low complexity; sequence SRSSPGESLGSSP. 2 stretches are compositionally biased toward basic and acidic residues: residues 283-292 and 318-336; these read KTDKTKPQRE and EKSK…RKES.

In Mus musculus (Mouse), this protein is T-cell activation GTPase-activating protein 1 (Tagap1).